We begin with the raw amino-acid sequence, 447 residues long: UDP-N-acetylmuramate--L-alanine ligase (447 aa).

Residue 108-114 (GSHGKTS) participates in ATP binding.

Belongs to the MurCDEF family.

Its subcellular location is the cytoplasm. It catalyses the reaction UDP-N-acetyl-alpha-D-muramate + L-alanine + ATP = UDP-N-acetyl-alpha-D-muramoyl-L-alanine + ADP + phosphate + H(+). Its pathway is cell wall biogenesis; peptidoglycan biosynthesis. Functionally, cell wall formation. In Listeria monocytogenes serotype 4b (strain F2365), this protein is UDP-N-acetylmuramate--L-alanine ligase.